Consider the following 136-residue polypeptide: Small ribosomal subunit protein bS6 (136 aa).

Over residues glutamate 117–valine 130 the composition is skewed to basic and acidic residues. Residues glutamate 117–leucine 136 form a disordered region.

It belongs to the bacterial ribosomal protein bS6 family.

Binds together with bS18 to 16S ribosomal RNA. This Bartonella quintana (strain Toulouse) (Rochalimaea quintana) protein is Small ribosomal subunit protein bS6.